The primary structure comprises 350 residues: Uroporphyrinogen decarboxylase (350 aa).

Residues Arg-28–Arg-32, Asp-78, Tyr-154, Thr-209, and His-325 contribute to the substrate site.

This sequence belongs to the uroporphyrinogen decarboxylase family. As to quaternary structure, homodimer.

The protein localises to the cytoplasm. The enzyme catalyses uroporphyrinogen III + 4 H(+) = coproporphyrinogen III + 4 CO2. It functions in the pathway porphyrin-containing compound metabolism; protoporphyrin-IX biosynthesis; coproporphyrinogen-III from 5-aminolevulinate: step 4/4. Catalyzes the decarboxylation of four acetate groups of uroporphyrinogen-III to yield coproporphyrinogen-III. This is Uroporphyrinogen decarboxylase from Nitrobacter hamburgensis (strain DSM 10229 / NCIMB 13809 / X14).